Here is a 48-residue protein sequence, read N- to C-terminus: MTNKNTGKDIRQNSPKEHQSGQPEPLSGSKKVKNRNHTRQKHNSHHDM.

The span at 1-19 shows a compositional bias: basic and acidic residues; sequence MTNKNTGKDIRQNSPKEHQ. Residues 1–48 are disordered; it reads MTNKNTGKDIRQNSPKEHQSGQPEPLSGSKKVKNRNHTRQKHNSHHDM. Residues 30-48 show a composition bias toward basic residues; sequence KKVKNRNHTRQKHNSHHDM.

This sequence belongs to the SspP family.

The protein localises to the spore core. The sequence is that of Small, acid-soluble spore protein P from Bacillus pumilus (strain SAFR-032).